We begin with the raw amino-acid sequence, 344 residues long: Ketol-acid reductoisomerase (NADP(+)) (344 aa).

Residues 1 to 181 (MATMYYEQNI…GAARGGLLET (181 aa)) enclose the KARI N-terminal Rossmann domain. Residues 25–28 (YGSQ), arginine 48, serine 52, and 82–85 (DERQ) each bind NADP(+). Residue histidine 107 is part of the active site. Glycine 133 is an NADP(+) binding site. Positions 182–327 (TFKEETETDL…AKLREMMPFI (146 aa)) constitute a KARI C-terminal knotted domain. Residues aspartate 190, glutamate 194, glutamate 226, and glutamate 230 each contribute to the Mg(2+) site. Serine 251 is a binding site for substrate.

Belongs to the ketol-acid reductoisomerase family. It depends on Mg(2+) as a cofactor.

It catalyses the reaction (2R)-2,3-dihydroxy-3-methylbutanoate + NADP(+) = (2S)-2-acetolactate + NADPH + H(+). It carries out the reaction (2R,3R)-2,3-dihydroxy-3-methylpentanoate + NADP(+) = (S)-2-ethyl-2-hydroxy-3-oxobutanoate + NADPH + H(+). It participates in amino-acid biosynthesis; L-isoleucine biosynthesis; L-isoleucine from 2-oxobutanoate: step 2/4. Its pathway is amino-acid biosynthesis; L-valine biosynthesis; L-valine from pyruvate: step 2/4. Functionally, involved in the biosynthesis of branched-chain amino acids (BCAA). Catalyzes an alkyl-migration followed by a ketol-acid reduction of (S)-2-acetolactate (S2AL) to yield (R)-2,3-dihydroxy-isovalerate. In the isomerase reaction, S2AL is rearranged via a Mg-dependent methyl migration to produce 3-hydroxy-3-methyl-2-ketobutyrate (HMKB). In the reductase reaction, this 2-ketoacid undergoes a metal-dependent reduction by NADPH to yield (R)-2,3-dihydroxy-isovalerate. The polypeptide is Ketol-acid reductoisomerase (NADP(+)) (Lysinibacillus sphaericus (strain C3-41)).